The primary structure comprises 512 residues: Lysine--tRNA ligase (512 aa).

Glu408 and Glu415 together coordinate Mg(2+).

This sequence belongs to the class-II aminoacyl-tRNA synthetase family. As to quaternary structure, homodimer. The cofactor is Mg(2+).

Its subcellular location is the cytoplasm. The catalysed reaction is tRNA(Lys) + L-lysine + ATP = L-lysyl-tRNA(Lys) + AMP + diphosphate. The polypeptide is Lysine--tRNA ligase (Prochlorococcus marinus (strain MIT 9515)).